The following is a 305-amino-acid chain: Ribonuclease BN (305 aa).

Zn(2+) is bound by residues histidine 64, histidine 66, aspartate 68, histidine 69, histidine 141, aspartate 212, and histidine 270. The active-site Proton acceptor is aspartate 68.

This sequence belongs to the RNase Z family. RNase BN subfamily. In terms of assembly, homodimer. It depends on Zn(2+) as a cofactor.

Its function is as follows. Zinc phosphodiesterase, which has both exoribonuclease and endoribonuclease activities. The protein is Ribonuclease BN of Escherichia coli O81 (strain ED1a).